Reading from the N-terminus, the 51-residue chain is Cytochrome b559 subunit beta (51 aa).

The chain crosses the membrane as a helical span at residues 26–42; it reads WLAVHALAVPTVFFIGS. His30 provides a ligand contact to heme.

The protein belongs to the PsbE/PsbF family. As to quaternary structure, heterodimer of an alpha subunit and a beta subunit. PSII is composed of 1 copy each of membrane proteins PsbA, PsbB, PsbC, PsbD, PsbE, PsbF, PsbH, PsbI, PsbJ, PsbK, PsbL, PsbM, PsbT, PsbY, PsbZ, Psb30/Ycf12, at least 3 peripheral proteins of the oxygen-evolving complex and a large number of cofactors. It forms dimeric complexes. The cofactor is heme b.

Its subcellular location is the plastid. The protein resides in the chloroplast thylakoid membrane. Its function is as follows. This b-type cytochrome is tightly associated with the reaction center of photosystem II (PSII). PSII is a light-driven water:plastoquinone oxidoreductase that uses light energy to abstract electrons from H(2)O, generating O(2) and a proton gradient subsequently used for ATP formation. It consists of a core antenna complex that captures photons, and an electron transfer chain that converts photonic excitation into a charge separation. This chain is Cytochrome b559 subunit beta, found in Bigelowiella natans (Pedinomonas minutissima).